Reading from the N-terminus, the 371-residue chain is Protein SPATA31F3 (371 aa).

A helical membrane pass occupies residues Ile-7–Trp-29. Residues Leu-62–Gln-86 adopt a coiled-coil conformation. 2 stretches are compositionally biased toward polar residues: residues Leu-189 to Gln-203 and Pro-244 to Ser-266. 3 disordered regions span residues Leu-189–Gln-222, Tyr-240–Met-299, and Tyr-326–Ile-371. Ser-197 and Ser-198 each carry phosphoserine. Residues Gln-277 to Val-287 show a composition bias toward basic residues. Positions Thr-330–Ala-362 are enriched in basic and acidic residues.

This sequence belongs to the SPATA31 family.

Its subcellular location is the membrane. The protein is Protein SPATA31F3 (Spata31f3) of Mus musculus (Mouse).